The chain runs to 523 residues: NAD(P)H-quinone oxidoreductase subunit 2 (523 aa).

13 helical membrane passes run Ala29 to Ala49, Trp57 to Trp77, Leu94 to Trp114, Leu132 to Ile152, Leu182 to Leu202, Pro221 to Val241, Pro255 to Leu275, Leu291 to Gln311, Met317 to Thr337, Val345 to Phe365, Leu389 to Gly409, Leu424 to Ile444, and Val477 to Phe497.

This sequence belongs to the complex I subunit 2 family. In terms of assembly, NDH-1 can be composed of about 15 different subunits; different subcomplexes with different compositions have been identified which probably have different functions.

It is found in the cellular thylakoid membrane. The enzyme catalyses a plastoquinone + NADH + (n+1) H(+)(in) = a plastoquinol + NAD(+) + n H(+)(out). It catalyses the reaction a plastoquinone + NADPH + (n+1) H(+)(in) = a plastoquinol + NADP(+) + n H(+)(out). In terms of biological role, NDH-1 shuttles electrons from an unknown electron donor, via FMN and iron-sulfur (Fe-S) centers, to quinones in the respiratory and/or the photosynthetic chain. The immediate electron acceptor for the enzyme in this species is believed to be plastoquinone. Couples the redox reaction to proton translocation, and thus conserves the redox energy in a proton gradient. Cyanobacterial NDH-1 also plays a role in inorganic carbon-concentration. The chain is NAD(P)H-quinone oxidoreductase subunit 2 from Synechococcus sp. (strain CC9902).